A 413-amino-acid chain; its full sequence is Na(+)-translocating NADH-quinone reductase subunit B (413 aa).

Helical transmembrane passes span Met56–Gly76, Leu123–Trp143, and Ile169–Ile189. Thr236 is modified (FMN phosphoryl threonine). The next 5 membrane-spanning stretches (helical) occupy residues Gly270 to Gly290, Ile297 to Ser317, Leu322 to Phe342, Trp358 to Tyr378, and Gly381 to Val401.

This sequence belongs to the NqrB/RnfD family. In terms of assembly, composed of six subunits; NqrA, NqrB, NqrC, NqrD, NqrE and NqrF. Requires FMN as cofactor.

The protein localises to the cell inner membrane. It carries out the reaction a ubiquinone + n Na(+)(in) + NADH + H(+) = a ubiquinol + n Na(+)(out) + NAD(+). NQR complex catalyzes the reduction of ubiquinone-1 to ubiquinol by two successive reactions, coupled with the transport of Na(+) ions from the cytoplasm to the periplasm. NqrA to NqrE are probably involved in the second step, the conversion of ubisemiquinone to ubiquinol. The chain is Na(+)-translocating NADH-quinone reductase subunit B from Yersinia pestis.